We begin with the raw amino-acid sequence, 321 residues long: Beta-ketoacyl-[acyl-carrier-protein] synthase III (321 aa).

Residues Cys114 and His248 contribute to the active site. An ACP-binding region spans residues 249 to 253; that stretch reads QANIR. Asn278 is a catalytic residue.

Belongs to the thiolase-like superfamily. FabH family. As to quaternary structure, homodimer.

It localises to the cytoplasm. It catalyses the reaction malonyl-[ACP] + acetyl-CoA + H(+) = 3-oxobutanoyl-[ACP] + CO2 + CoA. It functions in the pathway lipid metabolism; fatty acid biosynthesis. Functionally, catalyzes the condensation reaction of fatty acid synthesis by the addition to an acyl acceptor of two carbons from malonyl-ACP. Catalyzes the first condensation reaction which initiates fatty acid synthesis and may therefore play a role in governing the total rate of fatty acid production. Possesses both acetoacetyl-ACP synthase and acetyl transacylase activities. Its substrate specificity determines the biosynthesis of branched-chain and/or straight-chain of fatty acids. The chain is Beta-ketoacyl-[acyl-carrier-protein] synthase III from Methylococcus capsulatus (strain ATCC 33009 / NCIMB 11132 / Bath).